A 354-amino-acid chain; its full sequence is Chorismate synthase (354 aa).

NADP(+) is bound by residues Arg48 and Arg54. Residues 125 to 127 (RSS), 238 to 239 (NA), Gly278, 293 to 297 (KPTSS), and Arg319 each bind FMN.

The protein belongs to the chorismate synthase family. As to quaternary structure, homotetramer. The cofactor is FMNH2.

It catalyses the reaction 5-O-(1-carboxyvinyl)-3-phosphoshikimate = chorismate + phosphate. The protein operates within metabolic intermediate biosynthesis; chorismate biosynthesis; chorismate from D-erythrose 4-phosphate and phosphoenolpyruvate: step 7/7. Catalyzes the anti-1,4-elimination of the C-3 phosphate and the C-6 proR hydrogen from 5-enolpyruvylshikimate-3-phosphate (EPSP) to yield chorismate, which is the branch point compound that serves as the starting substrate for the three terminal pathways of aromatic amino acid biosynthesis. This reaction introduces a second double bond into the aromatic ring system. This Buchnera aphidicola subsp. Acyrthosiphon pisum (strain 5A) protein is Chorismate synthase.